The chain runs to 245 residues: Protein FAM133B (245 aa).

2 disordered regions span residues 19–38 (SRGPIQSSGPTIQDYLNRPR) and 69–245 (WKKE…SDSP). Over residues 69-80 (WKKELEKHREKL) the composition is skewed to basic and acidic residues. Residue S82 is modified to Phosphoserine. Basic residues predominate over residues 89 to 102 (KKRQKKKKEKKKSG). Residues 103–119 (RYSSSSSSSSDSSSSSS) are compositionally biased toward low complexity. Positions 128–140 (QTKRRKKKKSHCH) are enriched in basic residues. The segment covering 165–176 (KDITEREKDTKG) has biased composition (basic and acidic residues). A phosphoserine mark is found at S190, S191, S193, and S195. Residues 209–219 (SGEERERTTDK) show a composition bias toward basic and acidic residues. The span at 220–237 (AKKRRKHKKHSKKKKKKA) shows a compositional bias: basic residues.

It belongs to the FAM133 family.

The chain is Protein FAM133B (Fam133b) from Rattus norvegicus (Rat).